The sequence spans 139 residues: MTDEATALIAQYWATGLFIIAVFALCALMIGAASLLGGRSRGPSKSLPFESGVVGTGSARQRFSVKFYLVAMLFVIFDIEAVFLFAWAVSVREVGWEGFAGAAVFIFILLAGLVYDSRVGALEWAPRKRGRSPDIVTQR.

3 helical membrane-spanning segments follow: residues 16–36 (GLFI…ASLL), 69–89 (LVAM…AWAV), and 94–114 (VGWE…AGLV).

It belongs to the complex I subunit 3 family. NDH-1 is composed of 14 different subunits. Subunits NuoA, H, J, K, L, M, N constitute the membrane sector of the complex.

The protein resides in the cell inner membrane. The enzyme catalyses a quinone + NADH + 5 H(+)(in) = a quinol + NAD(+) + 4 H(+)(out). Its function is as follows. NDH-1 shuttles electrons from NADH, via FMN and iron-sulfur (Fe-S) centers, to quinones in the respiratory chain. The immediate electron acceptor for the enzyme in this species is believed to be ubiquinone. Couples the redox reaction to proton translocation (for every two electrons transferred, four hydrogen ions are translocated across the cytoplasmic membrane), and thus conserves the redox energy in a proton gradient. This is NADH-quinone oxidoreductase subunit A from Chromohalobacter salexigens (strain ATCC BAA-138 / DSM 3043 / CIP 106854 / NCIMB 13768 / 1H11).